A 397-amino-acid chain; its full sequence is Putative odorant receptor 83c (397 aa).

The Cytoplasmic portion of the chain corresponds to 1–39 (MSTSESPSSRFRELSKYINSLTNLLGVDFLSPKLKFNYR). The helical transmembrane segment at 40 to 60 (TWTTIFAIANYTGFTVFTILN) threads the bilayer. The Extracellular segment spans residues 61 to 70 (NGGDWRVGLK). A helical transmembrane segment spans residues 71 to 90 (ASLMTGGLFHGLGKFLTCLL). At 91 to 136 (KHQDMRRLVLYSQSIYDEYETRGDSYHRTLNSNIDRLLGIMKIIRN) the chain is on the cytoplasmic side. A helical membrane pass occupies residues 137–157 (GYVFAFCLMELLPLAMLMYDG). The Extracellular portion of the chain corresponds to 158 to 186 (TRVTAMQYLIPGLPLENNYCYVVTYMIQT). A helical transmembrane segment spans residues 187-207 (VTMLVQGVGFYSGDLFVFLGL). The Cytoplasmic segment spans residues 208–282 (TQILTFADML…ALYYELIATQ (75 aa)). The chain crosses the membrane as a helical span at residues 283 to 299 (VLSMALAMMLSFCINLS). Over 300 to 305 (SFHMPS) the chain is Extracellular. The chain crosses the membrane as a helical span at residues 306–326 (AIFFVVSAYSMSIYCILGTIL). Residues 327-365 (EFAYDQVYESICNVTWYELSGEQRKLFGFLLRESQYPHN) lie on the Cytoplasmic side of the membrane. The chain crosses the membrane as a helical span at residues 366–386 (IQILGVMSLSVRTALQIVKLI). Residues 387-397 (YSVSMMMMNRA) lie on the Extracellular side of the membrane.

The protein belongs to the insect chemoreceptor superfamily. Heteromeric odorant receptor channel (TC 1.A.69) family. Or67d subfamily. In terms of assembly, interacts with Orco. Complexes exist early in the endomembrane system in olfactory sensory neurons (OSNs), coupling these complexes to the conserved ciliary trafficking pathway. Expressed in olfactory sensory neurons in the antenna.

Its subcellular location is the cell membrane. In terms of biological role, odorant receptor which mediates acceptance or avoidance behavior, depending on its substrates. The odorant receptor repertoire encodes a large collection of odor stimuli that vary widely in identity, intensity, and duration. May form a complex with Orco to form odorant-sensing units, providing sensitive and prolonged odorant signaling and calcium permeability. This is Putative odorant receptor 83c (Or83c) from Drosophila melanogaster (Fruit fly).